We begin with the raw amino-acid sequence, 944 residues long: Neutral alpha-glucosidase AB (944 aa).

Residues 1–32 form the signal peptide; the sequence is MAAIAAVAARRRRSWLSLVLAYLGVCLGITLA. An intrachain disulfide couples Cys-41 to Cys-47. A Phosphoserine modification is found at Ser-52. Residue Asn-97 is glycosylated (N-linked (GlcNAc...) asparagine). Residues 180–238 form a disordered region; that stretch reads HQRAPRVPQESKDPAEGNGAQPEATPGDGDKPEETQEKAEKDEPGAWEETFKTHSDSKP. Basic and acidic residues predominate over residues 207–236; it reads DGDKPEETQEKAEKDEPGAWEETFKTHSDS. Substrate-binding residues include Asp-283 and Asp-429. Residue Asp-542 is the Nucleophile of the active site. Position 602 (Arg-602) interacts with substrate. Asp-618 acts as the Proton donor in catalysis. A disulfide bond links Cys-633 and Cys-644. Substrate is bound at residue His-676.

Belongs to the glycosyl hydrolase 31 family. As to quaternary structure, heterodimer of a catalytic alpha subunit (GANAB) and a beta subunit (PRKCSH). Binds glycosylated PTPRC.

It localises to the endoplasmic reticulum. It is found in the golgi apparatus. The protein localises to the melanosome. The catalysed reaction is N(4)-(alpha-D-Glc-(1-&gt;3)-alpha-D-Man-(1-&gt;2)-alpha-D-Man-(1-&gt;2)-alpha-D-Man-(1-&gt;3)-[alpha-D-Man-(1-&gt;2)-alpha-D-Man-(1-&gt;3)-[alpha-D-Man-(1-&gt;2)-alpha-D-Man-(1-&gt;6)]-alpha-D-Man-(1-&gt;6)]-beta-D-Man-(1-&gt;4)-beta-D-GlcNAc-(1-&gt;4)-beta-D-GlcNAc)-L-asparaginyl-[protein] + H2O = N(4)-(alpha-D-Man-(1-&gt;2)-alpha-D-Man-(1-&gt;2)-alpha-D-Man-(1-&gt;3)-[alpha-D-Man-(1-&gt;2)-alpha-D-Man-(1-&gt;3)-[alpha-D-Man-(1-&gt;2)-alpha-D-Man-(1-&gt;6)]-alpha-D-Man-(1-&gt;6)]-beta-D-Man-(1-&gt;4)-beta-D-GlcNAc-(1-&gt;4)-beta-D-GlcNAc)-L-asparaginyl-[protein] (N-glucan mannose isomer 9A1,2,3B1,2,3) + beta-D-glucose. It catalyses the reaction N(4)-(alpha-D-Glc-(1-&gt;3)-alpha-D-Glc-(1-&gt;3)-alpha-D-Man-(1-&gt;2)-alpha-D-Man-(1-&gt;2)-alpha-D-Man-(1-&gt;3)-[alpha-D-Man-(1-&gt;2)-alpha-D-Man-(1-&gt;3)-[alpha-D-Man-(1-&gt;2)-alpha-D-Man-(1-&gt;6)]-alpha-D-Man-(1-&gt;6)]-beta-D-Man-(1-&gt;4)-beta-D-GlcNAc-(1-&gt;4)-beta-D-GlcNAc)-L-asparaginyl-[protein] + H2O = N(4)-(alpha-D-Glc-(1-&gt;3)-alpha-D-Man-(1-&gt;2)-alpha-D-Man-(1-&gt;2)-alpha-D-Man-(1-&gt;3)-[alpha-D-Man-(1-&gt;2)-alpha-D-Man-(1-&gt;3)-[alpha-D-Man-(1-&gt;2)-alpha-D-Man-(1-&gt;6)]-alpha-D-Man-(1-&gt;6)]-beta-D-Man-(1-&gt;4)-beta-D-GlcNAc-(1-&gt;4)-beta-D-GlcNAc)-L-asparaginyl-[protein] + beta-D-glucose. Its pathway is glycan metabolism; N-glycan metabolism. Its function is as follows. Catalytic subunit of glucosidase II that cleaves sequentially the 2 innermost alpha-1,3-linked glucose residues from the Glc(2)Man(9)GlcNAc(2) oligosaccharide precursor of immature glycoproteins. Required for PKD1/Polycystin-1 and PKD2/Polycystin-2 maturation and localization to the cell surface and cilia. This is Neutral alpha-glucosidase AB from Mus musculus (Mouse).